The primary structure comprises 283 residues: MRDRVYRTEAIIIRRSDAGEADRLVTILTPLGRQRVVARGARKLHSRLAGHIELFTHTMLMLAIGRNLHIVTQSSPLDRFERLRTDLERIGAAYYAAELVDRLVEEEAENKRAFSILLGTLRALNAGAAIDLTLRAYELHLLDALGYRPQLYECAACGAVLTEATNRFSPVTGGALCPDCAGVDRLALPMSLAAFKLLRYLQSQPLEISGELRISPATRAETESLLRAYLRHILERDPRSLAFLDDVRQMLRTSSPASVGSSATRYFAQGDTDENDRDPPGAR.

The segment covering 254-264 (SSPASVGSSAT) has biased composition (polar residues). Positions 254-283 (SSPASVGSSATRYFAQGDTDENDRDPPGAR) are disordered.

This sequence belongs to the RecO family.

Involved in DNA repair and RecF pathway recombination. This is DNA repair protein RecO from Roseiflexus sp. (strain RS-1).